Here is a 428-residue protein sequence, read N- to C-terminus: Septin homolog spn7 (428 aa).

Residues 15–290 (KGKKLRIMVA…ENYRTEKLSN (276 aa)) form the Septin-type G domain. A G1 motif region spans residues 25–32 (GSSYTSYQ). GTP contacts are provided by residues 25–32 (GSSYTSYQ), Gly86, 166–174 (NSNAFTEEE), and Gly224. A G3 motif region spans residues 83 to 86 (EVNG). The G4 motif stretch occupies residues 165–168 (GNSN). Disordered regions lie at residues 287 to 345 (KLSN…SEEL) and 387 to 414 (KEFP…KKMD). Residues 290-307 (NDSPSNTSLSLQKQNSIV) are compositionally biased toward polar residues. Residues 309 to 325 (NEDKRSVNGSERTETRS) are compositionally biased toward basic and acidic residues. Polar residues-rich tracts occupy residues 326–339 (SIDQ…VSDS) and 392–405 (RTTS…NNTT).

The protein belongs to the TRAFAC class TrmE-Era-EngA-EngB-Septin-like GTPase superfamily. Septin GTPase family. In terms of assembly, component of the sporulation-specific septin complex composed of at least spn2, spn5, spn6 and spn7.

It is found in the cytoplasm. The protein resides in the nucleus. The protein localises to the forespore membrane. Functionally, septin-like protein involved in the correct orientation of forespore membrane extension during sporulation. Binds phosphatidylinositol 4-phosphate. This chain is Septin homolog spn7 (spn7), found in Schizosaccharomyces pombe (strain 972 / ATCC 24843) (Fission yeast).